The following is a 75-amino-acid chain: DNA-directed RNA polymerase subunit omega (75 aa).

Belongs to the RNA polymerase subunit omega family. As to quaternary structure, in cyanobacteria the RNAP catalytic core is composed of 2 alpha, 1 beta, 1 beta', 1 gamma and 1 omega subunit. When a sigma factor is associated with the core the holoenzyme is formed, which can initiate transcription.

The catalysed reaction is RNA(n) + a ribonucleoside 5'-triphosphate = RNA(n+1) + diphosphate. Its function is as follows. Promotes RNA polymerase assembly. Latches the N- and C-terminal regions of the beta' subunit thereby facilitating its interaction with the beta and alpha subunits. The sequence is that of DNA-directed RNA polymerase subunit omega from Prochlorococcus marinus (strain MIT 9313).